The following is a 681-amino-acid chain: Pumilio domain-containing protein C6G9.14 (681 aa).

Disordered stretches follow at residues 180–210 and 273–322; these read RPGLSSYTPGPSTSRRSISSSSNLGGNPGLI and ASTA…NVPS. Composition is skewed to low complexity over residues 187–210 and 273–286; these read TPGPSTSRRSISSSSNLGGNPGLI and ASTASTGSTDSSGS. Residues 319–659 form the PUM-HD domain; that stretch reads NVPSLISDDP…RILSKLERRH (341 aa). Pumilio repeat units lie at residues 342–378, 379–414, 415–451, 452–487, 488–523, 524–559, 560–595, and 596–633; these read SLQNSNILSFCKDQHGCRYLQRLLEKKNQSHIDAVFA, ETHPYLAVLMVDAFGNYLCQKLFEHASEAQRSTFIQ, IIAPKLVPISFNMHGTRALQKIIDLVSSPDQISCIVN, ALRPNVVLLTKDLNGNHVIQKCLNKFSQEDCQFIFD, AICEDPLDVSTHRHGCCVVQRCFDHASPAQIEQLVE, HIVPHALTLVQDAFGNYVLQYVLELNNPNHTEAIIS, YFLYKVRALSTQKFSSNVMEKCIFFAPAAIKEKLIS, and ELMDEKHLPKLLRDSFANYVIQTALDNASVKQRAELVE. Residues 656–666 show a composition bias toward basic and acidic residues; sequence ERRHPSSKEKP. Positions 656 to 681 are disordered; sequence ERRHPSSKEKPIVYSNSERVNTSSSA. Residues 669 to 681 are compositionally biased toward polar residues; the sequence is YSNSERVNTSSSA.

In Schizosaccharomyces pombe (strain 972 / ATCC 24843) (Fission yeast), this protein is Pumilio domain-containing protein C6G9.14.